The chain runs to 137 residues: Actin-depolymerizing factor 7 (137 aa).

Serine 6 carries the phosphoserine modification. Positions 7–137 (GMAVEDECKL…SFDIIKSRAL (131 aa)) constitute an ADF-H domain.

It belongs to the actin-binding proteins ADF family. As to expression, specifically expressed in pollen.

The protein resides in the cytoplasm. Its subcellular location is the cytoskeleton. In terms of biological role, actin-depolymerizing protein. Severs actin filaments (F-actin) and binds to actin monomers. Binds monomeric actin (G-actin) with a marked preference for the ADP-loaded form and inhibits the rate of nucleotide exchange on G-actin. Required for pollen tube growth. Promotes turnover of longitudinal actin cables by severing actin filaments in pollen tubes. The chain is Actin-depolymerizing factor 7 (ADF7) from Arabidopsis thaliana (Mouse-ear cress).